The chain runs to 99 residues: Secreted RxLR effector protein 94 (99 aa).

Positions 35-55 (RQLRQSANPSKAWHQWKSETR) match the RxLR-dEER motif.

The protein belongs to the RxLR effector family.

It localises to the secreted. Its subcellular location is the host nucleus. The protein localises to the host cytoplasm. In terms of biological role, secreted effector that completely suppresses the host cell death induced by cell death-inducing proteins. The sequence is that of Secreted RxLR effector protein 94 from Plasmopara viticola (Downy mildew of grapevine).